A 470-amino-acid polypeptide reads, in one-letter code: 4-O-methyltransferase 1 (470 aa).

S-adenosyl-L-methionine contacts are provided by residues 274–275 (GG), aspartate 297, 328–329 (DC), and lysine 344. The active-site Proton acceptor is the histidine 348.

Belongs to the class I-like SAM-binding methyltransferase superfamily. Cation-independent O-methyltransferase family. COMT subfamily.

Its function is as follows. S-adenosyl-L-methionine-dependent methyltransferase that preferentially catalyzes the methylation of 4-OH phenolic compounds like coniferyl alcohol, vanillyl alcohol and ferrulic acid. May play a role in promoting lignin degradation by methylating and inactivating free-hydroxyl phenolic compounds, products of lignin cleavage which are known inhibitors of lignin peroxidases. The polypeptide is 4-O-methyltransferase 1 (Phanerochaete chrysosporium (strain RP-78 / ATCC MYA-4764 / FGSC 9002) (White-rot fungus)).